The sequence spans 128 residues: Azurin (128 aa).

In terms of domain architecture, Plastocyanin-like spans alanine 1–serine 128. An intrachain disulfide couples cysteine 2 to cysteine 25. Cu cation-binding residues include histidine 45, cysteine 111, histidine 116, and methionine 120.

As to quaternary structure, monomer. Interacts with the AAUA/AAUB heterotetramer complex. It depends on Cu cation as a cofactor.

It localises to the periplasm. Its function is as follows. Transfers electrons from cytochrome c551 to cytochrome oxidase. Transfers electrons from the tryptophan tryptophylquinone of the aromatic amine dehydrogenase heterotetramer. The protein is Azurin of Alcaligenes faecalis.